We begin with the raw amino-acid sequence, 232 residues long: Triosephosphate isomerase (232 aa).

6-8 (NFK) serves as a coordination point for substrate. Residue His86 is the Electrophile of the active site. The active-site Proton acceptor is the Glu155. The substrate site is built by Gly161 and Ser191.

Belongs to the triosephosphate isomerase family. In terms of assembly, homodimer.

It localises to the cytoplasm. The enzyme catalyses D-glyceraldehyde 3-phosphate = dihydroxyacetone phosphate. It participates in carbohydrate biosynthesis; gluconeogenesis. The protein operates within carbohydrate degradation; glycolysis; D-glyceraldehyde 3-phosphate from glycerone phosphate: step 1/1. Functionally, involved in the gluconeogenesis. Catalyzes stereospecifically the conversion of dihydroxyacetone phosphate (DHAP) to D-glyceraldehyde-3-phosphate (G3P). The sequence is that of Triosephosphate isomerase from Nitratiruptor sp. (strain SB155-2).